We begin with the raw amino-acid sequence, 62 residues long: Small ribosomal subunit protein bS21 (62 aa).

Over residues 43-52 (VKKKLKSEAA) the composition is skewed to basic and acidic residues. Positions 43–62 (VKKKLKSEAARKRKAKKKRF) are disordered. Residues 53 to 62 (RKRKAKKKRF) are compositionally biased toward basic residues.

The protein belongs to the bacterial ribosomal protein bS21 family.

In Levilactobacillus brevis (strain ATCC 367 / BCRC 12310 / CIP 105137 / JCM 1170 / LMG 11437 / NCIMB 947 / NCTC 947) (Lactobacillus brevis), this protein is Small ribosomal subunit protein bS21.